A 394-amino-acid polypeptide reads, in one-letter code: Elongation factor Tu (394 aa).

Positions 10–204 (KPHVNIGTIG…AVDSYIPQPI (195 aa)) constitute a tr-type G domain. Residues 19-26 (GHVDHGKT) are G1. 19-26 (GHVDHGKT) contacts GTP. Threonine 26 contacts Mg(2+). A G2 region spans residues 60–64 (GITIS). The tract at residues 81–84 (DCPG) is G3. Residues 81 to 85 (DCPGH) and 136 to 139 (NKVD) contribute to the GTP site. Positions 136–139 (NKVD) are G4. Residues 174–176 (SAL) form a G5 region.

This sequence belongs to the TRAFAC class translation factor GTPase superfamily. Classic translation factor GTPase family. EF-Tu/EF-1A subfamily. As to quaternary structure, monomer.

Its subcellular location is the cytoplasm. It carries out the reaction GTP + H2O = GDP + phosphate + H(+). In terms of biological role, GTP hydrolase that promotes the GTP-dependent binding of aminoacyl-tRNA to the A-site of ribosomes during protein biosynthesis. In Rickettsia prowazekii (strain Madrid E), this protein is Elongation factor Tu.